A 908-amino-acid polypeptide reads, in one-letter code: Protein translocase subunit SecA (908 aa).

Residues glutamine 87, glycine 105 to threonine 109, and aspartate 512 contribute to the ATP site. The tract at residues aspartate 882–threonine 908 is disordered. Positions 892, 894, 903, and 904 each coordinate Zn(2+). The segment covering lysine 898–threonine 908 has biased composition (basic residues).

It belongs to the SecA family. Monomer and homodimer. Part of the essential Sec protein translocation apparatus which comprises SecA, SecYEG and auxiliary proteins SecDF-YajC and YidC. Zn(2+) is required as a cofactor.

It is found in the cell inner membrane. The protein resides in the cytoplasm. It catalyses the reaction ATP + H2O + cellular proteinSide 1 = ADP + phosphate + cellular proteinSide 2.. Functionally, part of the Sec protein translocase complex. Interacts with the SecYEG preprotein conducting channel. Has a central role in coupling the hydrolysis of ATP to the transfer of proteins into and across the cell membrane, serving both as a receptor for the preprotein-SecB complex and as an ATP-driven molecular motor driving the stepwise translocation of polypeptide chains across the membrane. This chain is Protein translocase subunit SecA, found in Shewanella amazonensis (strain ATCC BAA-1098 / SB2B).